A 408-amino-acid polypeptide reads, in one-letter code: G2/mitotic-specific cyclin-B (408 aa).

The protein belongs to the cyclin family. Cyclin AB subfamily. Interacts with the CDC2 protein kinase to form a serine/threonine kinase holoenzyme complex also known as maturation promoting factor (MPF). The cyclin subunit imparts substrate specificity to the complex.

In terms of biological role, essential for the control of the cell cycle at the G2/M (mitosis) transition. The protein is G2/mitotic-specific cyclin-B of Patella vulgata (Common limpet).